We begin with the raw amino-acid sequence, 343 residues long: Glucokinase (343 aa).

ATP is bound at residue 18–23 (GDIGGT).

It belongs to the bacterial glucokinase family.

The protein localises to the cytoplasm. It catalyses the reaction D-glucose + ATP = D-glucose 6-phosphate + ADP + H(+). This is Glucokinase from Brucella suis biovar 1 (strain 1330).